A 363-amino-acid polypeptide reads, in one-letter code: Glutamate 5-kinase (363 aa).

K6 contributes to the ATP binding site. Residues S46, D133, and N145 each coordinate substrate. ATP contacts are provided by residues 165–166 (TD) and 207–213 (TGGMHTK). Positions 271-349 (HGRLLLDGGA…REIEALLGYT (79 aa)) constitute a PUA domain.

Belongs to the glutamate 5-kinase family.

It localises to the cytoplasm. The catalysed reaction is L-glutamate + ATP = L-glutamyl 5-phosphate + ADP. Its pathway is amino-acid biosynthesis; L-proline biosynthesis; L-glutamate 5-semialdehyde from L-glutamate: step 1/2. Functionally, catalyzes the transfer of a phosphate group to glutamate to form L-glutamate 5-phosphate. The sequence is that of Glutamate 5-kinase from Deinococcus radiodurans (strain ATCC 13939 / DSM 20539 / JCM 16871 / CCUG 27074 / LMG 4051 / NBRC 15346 / NCIMB 9279 / VKM B-1422 / R1).